We begin with the raw amino-acid sequence, 236 residues long: Syntaxin-8 (236 aa).

Over 1 to 215 (MAPDPWFSTY…LVDRKSTSCG (215 aa)) the chain is Cytoplasmic. The stretch at 42 to 65 (LTIRTLLKNLKVKIDLLKDLLLRA) forms a coiled coil. The t-SNARE coiled-coil homology domain occupies 145–207 (QKIIQEQDAG…RTEARRVTLV (63 aa)). Position 160 is a phosphoserine (serine 160). A helical; Anchor for type IV membrane protein transmembrane segment spans residues 216-232 (MIMVILLLLVAIVVVAV). Residues 233–236 (WPTN) lie on the Vesicular side of the membrane.

The protein belongs to the syntaxin family. In terms of assembly, forms a SNARE complex with STX7, VTI1B and VAMP8 which functions in the homotypic fusion of late endosomes. Part of the SNARE core complex containing STX7, VAMP8 and VTI1B. Interacts with VAMP8. Interacts with HECTD3. Interacts with TPC1. Post-translationally, ubiquitinated by HECTD3.

Its subcellular location is the membrane. In terms of biological role, vesicle trafficking protein that functions in the early secretory pathway, possibly by mediating retrograde transport from cis-Golgi membranes to the ER. This Mus musculus (Mouse) protein is Syntaxin-8 (Stx8).